The sequence spans 937 residues: Leucine--tRNA ligase (937 aa).

The 'HIGH' region signature appears at 34 to 44 (PYPSGAMHIGH). Positions 609 to 613 (KMSSS) match the 'KMSKS' region motif.

It belongs to the class-I aminoacyl-tRNA synthetase family.

It is found in the cytoplasm. It catalyses the reaction tRNA(Leu) + L-leucine + ATP = L-leucyl-tRNA(Leu) + AMP + diphosphate. The protein is Leucine--tRNA ligase of Methanothermobacter thermautotrophicus (strain ATCC 29096 / DSM 1053 / JCM 10044 / NBRC 100330 / Delta H) (Methanobacterium thermoautotrophicum).